A 248-amino-acid chain; its full sequence is 2,3-bisphosphoglycerate-dependent phosphoglycerate mutase (248 aa).

Substrate-binding positions include 8-15 (RHGESEWN), 21-22 (TG), Arg60, 87-90 (ERHY), Lys98, 114-115 (RR), and 183-184 (GN). His9 (tele-phosphohistidine intermediate) is an active-site residue. Residue Glu87 is the Proton donor/acceptor of the active site.

This sequence belongs to the phosphoglycerate mutase family. BPG-dependent PGAM subfamily.

It catalyses the reaction (2R)-2-phosphoglycerate = (2R)-3-phosphoglycerate. Its pathway is carbohydrate degradation; glycolysis; pyruvate from D-glyceraldehyde 3-phosphate: step 3/5. Catalyzes the interconversion of 2-phosphoglycerate and 3-phosphoglycerate. The protein is 2,3-bisphosphoglycerate-dependent phosphoglycerate mutase of Borrelia turicatae (strain 91E135).